The sequence spans 205 residues: MIGRLRGLLVEKQAPEVLIETGGVGYEVQMPLTSFYELPELNQEAVIYTHFVVREDAQLLYGFITKQERALFRLLIKTNGVGPKLALTILSGMTAGEFVKCVEHDDIATLVKLPGVGKKTAERLLVEMRDKLKSLMEASHGNEREFVLQSNYTPAPVVNTAEEDAISALLALGYKPAQASKAVSSVFEEGMDSETLIKASLKSML.

Positions 1–64 (MIGRLRGLLV…EDAQLLYGFI (64 aa)) are domain I. Positions 65 to 143 (TKQERALFRL…SLMEASHGNE (79 aa)) are domain II. The tract at residues 144-156 (REFVLQSNYTPAP) is flexible linker. Residues 157-205 (VVNTAEEDAISALLALGYKPAQASKAVSSVFEEGMDSETLIKASLKSML) form a domain III region.

This sequence belongs to the RuvA family. In terms of assembly, homotetramer. Forms an RuvA(8)-RuvB(12)-Holliday junction (HJ) complex. HJ DNA is sandwiched between 2 RuvA tetramers; dsDNA enters through RuvA and exits via RuvB. An RuvB hexamer assembles on each DNA strand where it exits the tetramer. Each RuvB hexamer is contacted by two RuvA subunits (via domain III) on 2 adjacent RuvB subunits; this complex drives branch migration. In the full resolvosome a probable DNA-RuvA(4)-RuvB(12)-RuvC(2) complex forms which resolves the HJ.

It localises to the cytoplasm. The RuvA-RuvB-RuvC complex processes Holliday junction (HJ) DNA during genetic recombination and DNA repair, while the RuvA-RuvB complex plays an important role in the rescue of blocked DNA replication forks via replication fork reversal (RFR). RuvA specifically binds to HJ cruciform DNA, conferring on it an open structure. The RuvB hexamer acts as an ATP-dependent pump, pulling dsDNA into and through the RuvAB complex. HJ branch migration allows RuvC to scan DNA until it finds its consensus sequence, where it cleaves and resolves the cruciform DNA. The protein is Holliday junction branch migration complex subunit RuvA of Shewanella loihica (strain ATCC BAA-1088 / PV-4).